The sequence spans 334 residues: Trans-1,2-dihydrobenzene-1,2-diol dehydrogenase (334 aa).

Belongs to the Gfo/Idh/MocA family. In terms of assembly, homodimer. Small intestine.

The enzyme catalyses (1R,2R)-1,2-dihydrobenzene-1,2-diol + NADP(+) = catechol + NADPH + H(+). It carries out the reaction D-xylose + NADP(+) = D-xylono-1,5-lactone + NADPH + H(+). This Homo sapiens (Human) protein is Trans-1,2-dihydrobenzene-1,2-diol dehydrogenase (DHDH).